Consider the following 256-residue polypeptide: Ubiquinone/menaquinone biosynthesis C-methyltransferase UbiE (256 aa).

The segment covering 1 to 12 has biased composition (basic and acidic residues); that stretch reads MNDQRKGEHAEP. The interval 1-21 is disordered; it reads MNDQRKGEHAEPTTHFGYQDV. S-adenosyl-L-methionine contacts are provided by residues threonine 79, aspartate 100, and 128-129; that span reads DA.

It belongs to the class I-like SAM-binding methyltransferase superfamily. MenG/UbiE family.

It carries out the reaction a 2-demethylmenaquinol + S-adenosyl-L-methionine = a menaquinol + S-adenosyl-L-homocysteine + H(+). It catalyses the reaction a 2-methoxy-6-(all-trans-polyprenyl)benzene-1,4-diol + S-adenosyl-L-methionine = a 5-methoxy-2-methyl-3-(all-trans-polyprenyl)benzene-1,4-diol + S-adenosyl-L-homocysteine + H(+). Its pathway is quinol/quinone metabolism; menaquinone biosynthesis; menaquinol from 1,4-dihydroxy-2-naphthoate: step 2/2. It functions in the pathway cofactor biosynthesis; ubiquinone biosynthesis. Methyltransferase required for the conversion of demethylmenaquinol (DMKH2) to menaquinol (MKH2) and the conversion of 2-polyprenyl-6-methoxy-1,4-benzoquinol (DDMQH2) to 2-polyprenyl-3-methyl-6-methoxy-1,4-benzoquinol (DMQH2). The sequence is that of Ubiquinone/menaquinone biosynthesis C-methyltransferase UbiE from Pseudomonas putida (strain W619).